Consider the following 409-residue polypeptide: Protein naked cuticle homolog 2-like (409 aa).

Gly2 is lipidated: N-myristoyl glycine. Residues 109–144 (AEDNRQEWVFTLYDFDNSGKVTKEDMSSLMHTIYDV) form the EF-hand domain. Positions 122, 124, 126, 128, and 133 each coordinate Ca(2+). Disordered stretches follow at residues 166-224 (VTPE…YCVD), 243-315 (TSRF…RFPG), 346-367 (NHTH…IRSR), and 388-409 (RHEH…YHQT). 2 stretches are compositionally biased toward basic and acidic residues: residues 171 to 185 (AARR…RETS) and 193 to 224 (VRSE…YCVD). The segment covering 247-268 (DSSSPDADQDPPSRSSHSQSRP) has biased composition (low complexity). Residues 389–409 (HEHHHHHEHHHHHHYHHYHQT) show a composition bias toward basic residues.

This sequence belongs to the NKD family.

The protein resides in the cell membrane. It localises to the cytoplasm. In terms of biological role, cell autonomous antagonist of both the canonical and non-canonical Wnt signaling pathways. This chain is Protein naked cuticle homolog 2-like (nkd2l), found in Danio rerio (Zebrafish).